The primary structure comprises 201 residues: Protein OPI10 homolog (201 aa).

This sequence belongs to the OPI10 family.

In Anopheles gambiae (African malaria mosquito), this protein is Protein OPI10 homolog.